Here is a 246-residue protein sequence, read N- to C-terminus: 3-deoxy-manno-octulosonate cytidylyltransferase (246 aa).

It belongs to the KdsB family.

The protein localises to the cytoplasm. The catalysed reaction is 3-deoxy-alpha-D-manno-oct-2-ulosonate + CTP = CMP-3-deoxy-beta-D-manno-octulosonate + diphosphate. It functions in the pathway nucleotide-sugar biosynthesis; CMP-3-deoxy-D-manno-octulosonate biosynthesis; CMP-3-deoxy-D-manno-octulosonate from 3-deoxy-D-manno-octulosonate and CTP: step 1/1. The protein operates within bacterial outer membrane biogenesis; lipopolysaccharide biosynthesis. Activates KDO (a required 8-carbon sugar) for incorporation into bacterial lipopolysaccharide in Gram-negative bacteria. The chain is 3-deoxy-manno-octulosonate cytidylyltransferase from Rickettsia africae (strain ESF-5).